A 201-amino-acid polypeptide reads, in one-letter code: Probable chemoreceptor glutamine deamidase CheD (201 aa).

This sequence belongs to the CheD family.

The enzyme catalyses L-glutaminyl-[protein] + H2O = L-glutamyl-[protein] + NH4(+). Its function is as follows. Probably deamidates glutamine residues to glutamate on methyl-accepting chemotaxis receptors (MCPs), playing an important role in chemotaxis. In Chlorobium luteolum (strain DSM 273 / BCRC 81028 / 2530) (Pelodictyon luteolum), this protein is Probable chemoreceptor glutamine deamidase CheD.